Reading from the N-terminus, the 124-residue chain is Large-conductance mechanosensitive channel (124 aa).

3 helical membrane passes run 14-34 (VIDLAVGVIIGAAFTAIVQSL), 37-57 (NLINPLIGIFVGKIDLSNLVF), and 67-87 (GSFINSVINFLIISFVVFLIV).

It belongs to the MscL family. Homopentamer.

The protein resides in the cell membrane. Functionally, channel that opens in response to stretch forces in the membrane lipid bilayer. May participate in the regulation of osmotic pressure changes within the cell. This is Large-conductance mechanosensitive channel from Lactobacillus acidophilus (strain ATCC 700396 / NCK56 / N2 / NCFM).